The following is a 471-amino-acid chain: MSNAKTLYEKVYDAHVAVAAKGETPILYIDRHLVHEVTSPQAFDGLREKGRNVRQVGKTFATMDHNVSTQTKDINASGEMARIQMETLSKNCEEFGVTLYDLNHKYQGIVHVMGPELGITLPGMTIVCGDSHTATHGAFGSLAFGIGTSEVEHVLATQTLKQARAKTMKIEVKGKVTEGITAKDIVLAIIGKTTAAGGTGYVVEFCGEAITDLTMEGRMTVCNMAIELGAKAGLIAPDATTFDYITGRKFSPQGEDLTAAIEYWSSLKTDDDAKFDAVVSLDASEIKPQVTWGTNPGQVIAIDQPIPAPESFSDPVEKVSAEKALAYMGLEAGKSLTDYNVDKVFVGSCTNSRIEDIRAAAAVAKGNKVAAHVQALIVPGSEQVKAQAEKEGLDIIFKEAGFEWRLPGCSMCLAMNNDRLGPQERCASTSNRNFEGRQGRDGRTHLVSPAMAAAAAIAGHFVDIRTITEKA.

C349, C409, and C412 together coordinate [4Fe-4S] cluster.

Belongs to the aconitase/IPM isomerase family. LeuC type 1 subfamily. In terms of assembly, heterodimer of LeuC and LeuD. [4Fe-4S] cluster serves as cofactor.

The enzyme catalyses (2R,3S)-3-isopropylmalate = (2S)-2-isopropylmalate. It participates in amino-acid biosynthesis; L-leucine biosynthesis; L-leucine from 3-methyl-2-oxobutanoate: step 2/4. Its function is as follows. Catalyzes the isomerization between 2-isopropylmalate and 3-isopropylmalate, via the formation of 2-isopropylmaleate. The chain is 3-isopropylmalate dehydratase large subunit from Aliivibrio salmonicida (strain LFI1238) (Vibrio salmonicida (strain LFI1238)).